We begin with the raw amino-acid sequence, 593 residues long: NADH-quinone oxidoreductase subunit C/D (593 aa).

The interval 1–184 (MTADSALYIP…DPYSLSAAKQ (184 aa)) is NADH dehydrogenase I subunit C. An NADH dehydrogenase I subunit D region spans residues 208–593 (DYMFLNLGPN…IDFVMADVDR (386 aa)).

This sequence in the N-terminal section; belongs to the complex I 30 kDa subunit family. The protein in the C-terminal section; belongs to the complex I 49 kDa subunit family. As to quaternary structure, NDH-1 is composed of 13 different subunits. Subunits NuoB, CD, E, F, and G constitute the peripheral sector of the complex.

The protein localises to the cell inner membrane. It carries out the reaction a quinone + NADH + 5 H(+)(in) = a quinol + NAD(+) + 4 H(+)(out). In terms of biological role, NDH-1 shuttles electrons from NADH, via FMN and iron-sulfur (Fe-S) centers, to quinones in the respiratory chain. The immediate electron acceptor for the enzyme in this species is believed to be ubiquinone. Couples the redox reaction to proton translocation (for every two electrons transferred, four hydrogen ions are translocated across the cytoplasmic membrane), and thus conserves the redox energy in a proton gradient. This chain is NADH-quinone oxidoreductase subunit C/D, found in Pseudomonas aeruginosa (strain UCBPP-PA14).